A 53-amino-acid polypeptide reads, in one-letter code: Lupus La protein homolog (53 aa).

The segment covering 1 to 13 (GKVEFQGKKTKFD) has biased composition (basic and acidic residues). The tract at residues 1-53 (GKVEFQGKKTKFDSDDERNENGAAGPVKRAREETDKEEPASKQQKTENGAGDQ) is disordered. Lys-8 carries the N6-acetyllysine modification. Position 10 is a phosphothreonine (Thr-10). Residue Ser-14 is modified to Phosphoserine. Residues 29–40 (RAREETDKEEPA) show a composition bias toward basic and acidic residues.

Interacts with DDX15. May interact with RUFY1. Post-translationally, phosphorylated.

Its subcellular location is the nucleus. In terms of biological role, binds to the 3' poly(U) terminus of nascent RNA polymerase III transcripts, protecting them from exonuclease digestion and facilitating their folding and maturation. This chain is Lupus La protein homolog (SSB), found in Oryctolagus cuniculus (Rabbit).